Consider the following 341-residue polypeptide: Aspartate carbamoyltransferase catalytic subunit (341 aa).

Arginine 89 and threonine 90 together coordinate carbamoyl phosphate. Lysine 117 is an L-aspartate binding site. Carbamoyl phosphate contacts are provided by arginine 139, histidine 169, and glutamine 172. Arginine 202 and arginine 257 together coordinate L-aspartate. Positions 298 and 299 each coordinate carbamoyl phosphate.

It belongs to the aspartate/ornithine carbamoyltransferase superfamily. ATCase family. In terms of assembly, heterododecamer (2C3:3R2) of six catalytic PyrB chains organized as two trimers (C3), and six regulatory PyrI chains organized as three dimers (R2).

The catalysed reaction is carbamoyl phosphate + L-aspartate = N-carbamoyl-L-aspartate + phosphate + H(+). Its pathway is pyrimidine metabolism; UMP biosynthesis via de novo pathway; (S)-dihydroorotate from bicarbonate: step 2/3. Its function is as follows. Catalyzes the condensation of carbamoyl phosphate and aspartate to form carbamoyl aspartate and inorganic phosphate, the committed step in the de novo pyrimidine nucleotide biosynthesis pathway. This is Aspartate carbamoyltransferase catalytic subunit from Paraburkholderia xenovorans (strain LB400).